The sequence spans 365 residues: 1-deoxy-D-xylulose 5-phosphate reductoisomerase (365 aa).

NADPH is bound by residues T7, G8, S9, I10, A31, K32, N33, and N114. Residue K115 coordinates 1-deoxy-D-xylulose 5-phosphate. Residue E116 coordinates NADPH. D134 contributes to the Mn(2+) binding site. 1-deoxy-D-xylulose 5-phosphate-binding residues include S135, E136, S158, and H181. E136 serves as a coordination point for Mn(2+). G187 is an NADPH binding site. 1-deoxy-D-xylulose 5-phosphate contacts are provided by S194, N199, K200, and E203. E203 contributes to the Mn(2+) binding site.

Belongs to the DXR family. It depends on Mg(2+) as a cofactor. Mn(2+) serves as cofactor.

The enzyme catalyses 2-C-methyl-D-erythritol 4-phosphate + NADP(+) = 1-deoxy-D-xylulose 5-phosphate + NADPH + H(+). It functions in the pathway isoprenoid biosynthesis; isopentenyl diphosphate biosynthesis via DXP pathway; isopentenyl diphosphate from 1-deoxy-D-xylulose 5-phosphate: step 1/6. In terms of biological role, catalyzes the NADPH-dependent rearrangement and reduction of 1-deoxy-D-xylulose-5-phosphate (DXP) to 2-C-methyl-D-erythritol 4-phosphate (MEP). This is 1-deoxy-D-xylulose 5-phosphate reductoisomerase from Campylobacter curvus (strain 525.92).